Reading from the N-terminus, the 155-residue chain is Protein SprT-like (155 aa).

One can recognise a SprT-like domain in the interval 6-148; that stretch reads LQRLVERVSL…VCGQCGGKLM (143 aa). Residue His67 participates in Zn(2+) binding. Glu68 is a catalytic residue. His71 is a Zn(2+) binding site.

Belongs to the SprT family. The cofactor is Zn(2+).

Its subcellular location is the cytoplasm. The protein is Protein SprT-like of Geobacillus sp. (strain WCH70).